Consider the following 95-residue polypeptide: Large ribosomal subunit protein uL23cz/uL23cy (95 aa).

Belongs to the universal ribosomal protein uL23 family. In terms of assembly, part of the 50S ribosomal subunit.

The protein localises to the plastid. The protein resides in the chloroplast. Functionally, binds to 23S rRNA. The protein is Large ribosomal subunit protein uL23cz/uL23cy (rpl23-A) of Amborella trichopoda.